The chain runs to 485 residues: Aspartyl/glutamyl-tRNA(Asn/Gln) amidotransferase subunit B (485 aa).

This sequence belongs to the GatB/GatE family. GatB subfamily. Heterotrimer of A, B and C subunits.

The enzyme catalyses L-glutamyl-tRNA(Gln) + L-glutamine + ATP + H2O = L-glutaminyl-tRNA(Gln) + L-glutamate + ADP + phosphate + H(+). It catalyses the reaction L-aspartyl-tRNA(Asn) + L-glutamine + ATP + H2O = L-asparaginyl-tRNA(Asn) + L-glutamate + ADP + phosphate + 2 H(+). In terms of biological role, allows the formation of correctly charged Asn-tRNA(Asn) or Gln-tRNA(Gln) through the transamidation of misacylated Asp-tRNA(Asn) or Glu-tRNA(Gln) in organisms which lack either or both of asparaginyl-tRNA or glutaminyl-tRNA synthetases. The reaction takes place in the presence of glutamine and ATP through an activated phospho-Asp-tRNA(Asn) or phospho-Glu-tRNA(Gln). The chain is Aspartyl/glutamyl-tRNA(Asn/Gln) amidotransferase subunit B from Gluconobacter oxydans (strain 621H) (Gluconobacter suboxydans).